A 561-amino-acid polypeptide reads, in one-letter code: Mercuric reductase (561 aa).

The region spanning 1–65 (MTTLKITGMT…AVAGLGYEAT (65 aa)) is the HMA domain. Residues Cys-11 and Cys-14 each contribute to the a metal cation site. Ala-110, Gly-130, and Thr-135 together coordinate FAD. Cys-136 and Cys-141 are joined by a disulfide. FAD-binding residues include Lys-145, Ala-211, Asp-403, and Val-411. Positions 558 and 559 each coordinate Hg(2+).

The protein belongs to the class-I pyridine nucleotide-disulfide oxidoreductase family. In terms of assembly, homodimer. The cofactor is FAD.

It carries out the reaction Hg + NADP(+) + H(+) = Hg(2+) + NADPH. In terms of biological role, resistance to Hg(2+) in bacteria appears to be governed by a specialized system which includes mercuric reductase. MerA protein is responsible for volatilizing mercury as Hg(0). The polypeptide is Mercuric reductase (merA) (Enterobacter agglomerans (Erwinia herbicola)).